An 86-amino-acid polypeptide reads, in one-letter code: Small ribosomal subunit protein bS20 (86 aa).

The protein belongs to the bacterial ribosomal protein bS20 family.

In terms of biological role, binds directly to 16S ribosomal RNA. This chain is Small ribosomal subunit protein bS20, found in Aliarcobacter butzleri (strain RM4018) (Arcobacter butzleri).